The following is a 262-amino-acid chain: Cell division protein FtsQ (262 aa).

The Cytoplasmic segment spans residues Met-1–Tyr-20. Residues Leu-21–Leu-41 traverse the membrane as a helical segment. Topologically, residues Leu-42–Arg-262 are periplasmic. The 70-residue stretch at Leu-52–Gln-121 folds into the POTRA domain.

The protein belongs to the FtsQ/DivIB family. FtsQ subfamily. Part of a complex composed of FtsB, FtsL and FtsQ.

It is found in the cell inner membrane. In terms of biological role, essential cell division protein. May link together the upstream cell division proteins, which are predominantly cytoplasmic, with the downstream cell division proteins, which are predominantly periplasmic. May control correct divisome assembly. This is Cell division protein FtsQ from Shewanella oneidensis (strain ATCC 700550 / JCM 31522 / CIP 106686 / LMG 19005 / NCIMB 14063 / MR-1).